Consider the following 175-residue polypeptide: Large ribosomal subunit protein bL9 (175 aa).

It belongs to the bacterial ribosomal protein bL9 family.

Binds to the 23S rRNA. The polypeptide is Large ribosomal subunit protein bL9 (Orientia tsutsugamushi (strain Boryong) (Rickettsia tsutsugamushi)).